A 691-amino-acid polypeptide reads, in one-letter code: MSVKREYPLKMYRNIGIMAHIDAGKTTTTERILFYTGKTHKIGETHDGAATMDWMVQEQERGITITSAATTCIWKDHVINVIDTPGHVDFTVEVERSLRVLDGAVTVLTAKGGVEPQTETVWRQADKYKVPRMAYVNKMDIMGADFFRVVNMMRERLHANAVPIQIPIGAEDTFKGYVDLIRNEAIIYEDDLGTVMDTEEIPEDMKDIAEEYRGAMIEAIVELDEELMMKYLEGEEISVEELDLALRKGVLANKIVPVMCGSSYKNKGVQPMIDAIVKYLPSPLDIPPVKGTHPETGEEVERKASDDEPMSTLAFKIATDPFIGKLAFVRVYSGVMKNGTYVLNPVKGKRERIGRLVKMHANHREEVEELHAGDLGAVVGLKDTITGDTLCDEKEPVILEKMEFPEPVISIAIEPKTKAGQEKMGLSLAKLAEEDPTFRTFTNQETGQTIIEGMGELHLEVIVDRLQREFKVECNVGKPQVAYKETIKKAVKAEGKFVRQSGGRGQYGHCWIEMTPHEGEYEFQNAIVGGAIPKEYIPAIDHGIEEASDSGVIAGYPVINFKVKLYDGSYHDVDSSEMAFKIAGSMAFKNAMSKADPVLLEPVMKVEVVVPEEYMGDVMGDINSRRGRIDGMEATAGAQNIRAFVPLSQMFGYATVLRSRTQGRGNYSMEFDHYEEVPKSIQEEIIGERMK.

Residues 10–284 form the tr-type G domain; it reads KMYRNIGIMA…AIVKYLPSPL (275 aa). Residues 19-26, 83-87, and 137-140 contribute to the GTP site; these read AHIDAGKT, DTPGH, and NKMD.

Belongs to the TRAFAC class translation factor GTPase superfamily. Classic translation factor GTPase family. EF-G/EF-2 subfamily.

It localises to the cytoplasm. Catalyzes the GTP-dependent ribosomal translocation step during translation elongation. During this step, the ribosome changes from the pre-translocational (PRE) to the post-translocational (POST) state as the newly formed A-site-bound peptidyl-tRNA and P-site-bound deacylated tRNA move to the P and E sites, respectively. Catalyzes the coordinated movement of the two tRNA molecules, the mRNA and conformational changes in the ribosome. The sequence is that of Elongation factor G from Clostridium tetani (strain Massachusetts / E88).